We begin with the raw amino-acid sequence, 179 residues long: Acireductone dioxygenase (179 aa).

The Fe(2+) site is built by His-100, His-102, Glu-106, and His-145. Residues His-100, His-102, Glu-106, and His-145 each coordinate Ni(2+).

This sequence belongs to the acireductone dioxygenase (ARD) family. Monomer. It depends on Fe(2+) as a cofactor. Ni(2+) serves as cofactor.

The catalysed reaction is 1,2-dihydroxy-5-(methylsulfanyl)pent-1-en-3-one + O2 = 3-(methylsulfanyl)propanoate + CO + formate + 2 H(+). The enzyme catalyses 1,2-dihydroxy-5-(methylsulfanyl)pent-1-en-3-one + O2 = 4-methylsulfanyl-2-oxobutanoate + formate + 2 H(+). Its pathway is amino-acid biosynthesis; L-methionine biosynthesis via salvage pathway; L-methionine from S-methyl-5-thio-alpha-D-ribose 1-phosphate: step 5/6. In terms of biological role, catalyzes 2 different reactions between oxygen and the acireductone 1,2-dihydroxy-3-keto-5-methylthiopentene (DHK-MTPene) depending upon the metal bound in the active site. Fe-containing acireductone dioxygenase (Fe-ARD) produces formate and 2-keto-4-methylthiobutyrate (KMTB), the alpha-ketoacid precursor of methionine in the methionine recycle pathway. Ni-containing acireductone dioxygenase (Ni-ARD) produces methylthiopropionate, carbon monoxide and formate, and does not lie on the methionine recycle pathway. The polypeptide is Acireductone dioxygenase (Bacillus licheniformis (strain ATCC 14580 / DSM 13 / JCM 2505 / CCUG 7422 / NBRC 12200 / NCIMB 9375 / NCTC 10341 / NRRL NRS-1264 / Gibson 46)).